A 465-amino-acid chain; its full sequence is A-type ATP synthase subunit B (465 aa).

This sequence belongs to the ATPase alpha/beta chains family. In terms of assembly, has multiple subunits with at least A(3), B(3), C, D, E, F, H, I and proteolipid K(x).

The protein localises to the cell membrane. In terms of biological role, component of the A-type ATP synthase that produces ATP from ADP in the presence of a proton gradient across the membrane. The B chain is a regulatory subunit. The sequence is that of A-type ATP synthase subunit B from Thermococcus onnurineus (strain NA1).